A 451-amino-acid chain; its full sequence is Cindoxin reductase (451 aa).

Residues Ala24, Glu45, Leu53, and Val89 each coordinate FAD. Residues 157–160 (NGNV) and 197–198 (RS) contribute to the NADP(+) site. Residues Trp338 and 345–347 (GGI) contribute to the FAD site. NADP(+) is bound at residue Gly345.

It belongs to the ferredoxin--NADP reductase type 1 family. FAD serves as cofactor.

In terms of biological role, involved in the degradation of cineol (eucalyptol). Catalyzes the reduction of cindoxin (CinC). This Citrobacter braakii protein is Cindoxin reductase (cinB).